The primary structure comprises 31 residues: Photosystem II reaction center protein T (31 aa).

The chain crosses the membrane as a helical span at residues 3-23 (ALVYVFLLTGTLMVIFFAIFF).

It belongs to the PsbT family. As to quaternary structure, PSII is composed of 1 copy each of membrane proteins PsbA, PsbB, PsbC, PsbD, PsbE, PsbF, PsbH, PsbI, PsbJ, PsbK, PsbL, PsbM, PsbT, PsbX, PsbY, PsbZ, Psb30/Ycf12, at least 3 peripheral proteins of the oxygen-evolving complex and a large number of cofactors. It forms dimeric complexes.

It is found in the plastid. It localises to the chloroplast thylakoid membrane. Its function is as follows. Found at the monomer-monomer interface of the photosystem II (PS II) dimer, plays a role in assembly and dimerization of PSII. PSII is a light-driven water plastoquinone oxidoreductase, using light energy to abstract electrons from H(2)O, generating a proton gradient subsequently used for ATP formation. This Pyropia yezoensis (Susabi-nori) protein is Photosystem II reaction center protein T.